Reading from the N-terminus, the 389-residue chain is ATP phosphoribosyltransferase regulatory subunit (389 aa).

The protein belongs to the class-II aminoacyl-tRNA synthetase family. HisZ subfamily. In terms of assembly, heteromultimer composed of HisG and HisZ subunits.

Its subcellular location is the cytoplasm. Its pathway is amino-acid biosynthesis; L-histidine biosynthesis; L-histidine from 5-phospho-alpha-D-ribose 1-diphosphate: step 1/9. Its function is as follows. Required for the first step of histidine biosynthesis. May allow the feedback regulation of ATP phosphoribosyltransferase activity by histidine. This is ATP phosphoribosyltransferase regulatory subunit from Moorella thermoacetica (strain ATCC 39073 / JCM 9320).